Reading from the N-terminus, the 331-residue chain is MDFHRLLQHKQQRWQRSSYLLIGLFLSVCVLYLLVGELWLSPFSAWSSLEQQLVWELRLPRLLAAAVIGASLAVAGATLQVLLGNVLAEPGVVGVSGGASVAMVILLLFFPSLNSPVAFMAAAVLGALLFTLLLVVMARKLRLTTARLLLVGVALGILSGAVVTWAFYFSDDLGLRQLMYWLMGSVAGVSWYQHLLSLVAVPVVIWLVLQGGVLDKLMLGEGHAKQLGIDIHRVRWRLILAIALLVGASVALGGVIGFVGLVVPHLLRLTLGSENRLLLPLSALCGALLLVSADLIARLALGSGELPLGVVTTTLGAPIFIWMLVRNHDSC.

9 consecutive transmembrane segments (helical) span residues 20-42 (LLIG…WLSP), 62-84 (LLAA…VLLG), 91-113 (GVVG…FPSL), 117-136 (VAFM…LLVV), 148-170 (LLLV…FYFS), 190-209 (SWYQ…WLVL), 240-262 (LAIA…VGLV), 277-299 (LLLP…IARL), and 306-325 (LPLG…WMLV).

Belongs to the binding-protein-dependent transport system permease family. FecCD subfamily. In terms of assembly, the complex is composed of two ATP-binding proteins (BtuD), two transmembrane proteins (BtuC) and a solute-binding protein (BtuF).

Its subcellular location is the cell inner membrane. In terms of biological role, part of the ABC transporter complex BtuCDF involved in vitamin B12 import. Involved in the translocation of the substrate across the membrane. The chain is Vitamin B12 import system permease protein BtuC from Vibrio cholerae serotype O1 (strain ATCC 39315 / El Tor Inaba N16961).